A 201-amino-acid chain; its full sequence is Beta-lactamase inhibitory protein (201 aa).

Residues methionine 1 to alanine 36 form the signal peptide. 2 repeat units span residues alanine 37 to leucine 112 and alanine 116 to valine 201. 2 cysteine pairs are disulfide-bonded: cysteine 66–cysteine 78 and cysteine 145–cysteine 167.

As to quaternary structure, interacts with E.coli beta-lactamase TEM-1; interaction inhibits hydrolysis of beta-lactam antibiotics. Interacts with K.pneumoniae beta-lactamase SHV-1. Interacts with K.pneumoniae beta-lactamases KPC-2 and KPC-3; interaction inhibits hydrolysis of beta-lactam antibiotics. Interacts with E.coli beta-lactamases CTX-M-14 and CTX-M-15; interaction inhibits hydrolysis of beta-lactam antibiotics.

The protein localises to the secreted. Inhibits a wide variety of beta lactamases. In Streptomyces clavuligerus, this protein is Beta-lactamase inhibitory protein.